A 329-amino-acid polypeptide reads, in one-letter code: Phenylalanine--tRNA ligase alpha subunit (329 aa).

Glutamate 254 lines the Mg(2+) pocket.

The protein belongs to the class-II aminoacyl-tRNA synthetase family. Phe-tRNA synthetase alpha subunit type 1 subfamily. Tetramer of two alpha and two beta subunits. The cofactor is Mg(2+).

Its subcellular location is the cytoplasm. The enzyme catalyses tRNA(Phe) + L-phenylalanine + ATP = L-phenylalanyl-tRNA(Phe) + AMP + diphosphate + H(+). The protein is Phenylalanine--tRNA ligase alpha subunit of Histophilus somni (strain 2336) (Haemophilus somnus).